The chain runs to 210 residues: Orotate phosphoribosyltransferase (210 aa).

5-phospho-alpha-D-ribose 1-diphosphate is bound by residues R97, K101, H103, and 123 to 131; that span reads EDLISTGGS. Orotate is bound at residue S127.

Belongs to the purine/pyrimidine phosphoribosyltransferase family. PyrE subfamily. As to quaternary structure, homodimer. The cofactor is Mg(2+).

The enzyme catalyses orotidine 5'-phosphate + diphosphate = orotate + 5-phospho-alpha-D-ribose 1-diphosphate. Its pathway is pyrimidine metabolism; UMP biosynthesis via de novo pathway; UMP from orotate: step 1/2. Catalyzes the transfer of a ribosyl phosphate group from 5-phosphoribose 1-diphosphate to orotate, leading to the formation of orotidine monophosphate (OMP). This is Orotate phosphoribosyltransferase from Porphyromonas gingivalis (strain ATCC BAA-308 / W83).